A 299-amino-acid chain; its full sequence is Dermonecrotic toxin LiSicTox-alphaIVA1 (299 aa).

The N-terminal stretch at 1–18 is a signal peptide; it reads MLFPTALIFGCWALVIEG. H30 is a catalytic residue. Mg(2+) contacts are provided by E50 and D52. H66 serves as the catalytic Nucleophile. 2 disulfides stabilise this stretch: C70–C76 and C72–C217. D110 lines the Mg(2+) pocket.

It belongs to the arthropod phospholipase D family. Class II subfamily. Class IIa sub-subfamily. Mg(2+) serves as cofactor. Expressed by the venom gland.

It localises to the secreted. The catalysed reaction is an N-(acyl)-sphingosylphosphocholine = an N-(acyl)-sphingosyl-1,3-cyclic phosphate + choline. It carries out the reaction an N-(acyl)-sphingosylphosphoethanolamine = an N-(acyl)-sphingosyl-1,3-cyclic phosphate + ethanolamine. It catalyses the reaction a 1-acyl-sn-glycero-3-phosphocholine = a 1-acyl-sn-glycero-2,3-cyclic phosphate + choline. The enzyme catalyses a 1-acyl-sn-glycero-3-phosphoethanolamine = a 1-acyl-sn-glycero-2,3-cyclic phosphate + ethanolamine. Its function is as follows. Dermonecrotic toxins cleave the phosphodiester linkage between the phosphate and headgroup of certain phospholipids (sphingolipid and lysolipid substrates), forming an alcohol (often choline) and a cyclic phosphate. This toxin acts on sphingomyelin (SM) with high activity. It may also act on ceramide phosphoethanolamine (CPE), lysophosphatidylcholine (LPC) and lysophosphatidylethanolamine (LPE), but not on lysophosphatidylserine (LPS), and lysophosphatidylglycerol (LPG). It acts by transphosphatidylation, releasing exclusively cyclic phosphate products as second products. Has hemolytic activity in human erythrocytes in a dose-dependent manner. In vivo, this toxin induces dermonecrosis, edema, hemorrhage, massive inflammatory response, as well as vascular permeability. In addition, thrombus formation has also been detected in dermal blood vessels. It also induces platelet aggregation. It is noteworthy that a Glu-248 replaces the Asp present in paralogs, without decrease in catalytic and hemolytic activities. This is Dermonecrotic toxin LiSicTox-alphaIVA1 from Loxosceles intermedia (Brown spider).